The following is a 99-amino-acid chain: Small ribosomal subunit protein uS14m (99 aa).

The protein belongs to the universal ribosomal protein uS14 family.

The protein localises to the mitochondrion. This is Small ribosomal subunit protein uS14m (RPS14) from Oenothera berteroana (Bertero's evening primrose).